A 294-amino-acid polypeptide reads, in one-letter code: 4-hydroxy-tetrahydrodipicolinate synthase (294 aa).

A pyruvate-binding site is contributed by T47. The Proton donor/acceptor role is filled by Y135. The Schiff-base intermediate with substrate role is filled by K163. I206 serves as a coordination point for pyruvate.

The protein belongs to the DapA family. Homodimer.

Its subcellular location is the cytoplasm. The enzyme catalyses L-aspartate 4-semialdehyde + pyruvate = (2S,4S)-4-hydroxy-2,3,4,5-tetrahydrodipicolinate + H2O + H(+). Its pathway is amino-acid biosynthesis; L-lysine biosynthesis via DAP pathway; (S)-tetrahydrodipicolinate from L-aspartate: step 3/4. Catalyzes the condensation of (S)-aspartate-beta-semialdehyde [(S)-ASA] and pyruvate to 4-hydroxy-tetrahydrodipicolinate (HTPA). The chain is 4-hydroxy-tetrahydrodipicolinate synthase from Staphylococcus haemolyticus (strain JCSC1435).